A 134-amino-acid polypeptide reads, in one-letter code: Large ribosomal subunit protein uL22 (134 aa).

This sequence belongs to the universal ribosomal protein uL22 family. Part of the 50S ribosomal subunit.

This protein binds specifically to 23S rRNA; its binding is stimulated by other ribosomal proteins, e.g. L4, L17, and L20. It is important during the early stages of 50S assembly. It makes multiple contacts with different domains of the 23S rRNA in the assembled 50S subunit and ribosome. Functionally, the globular domain of the protein is located near the polypeptide exit tunnel on the outside of the subunit, while an extended beta-hairpin is found that lines the wall of the exit tunnel in the center of the 70S ribosome. The sequence is that of Large ribosomal subunit protein uL22 from Porphyromonas gingivalis (strain ATCC 33277 / DSM 20709 / CIP 103683 / JCM 12257 / NCTC 11834 / 2561).